A 628-amino-acid polypeptide reads, in one-letter code: Chaperone protein HtpG (628 aa).

Residues 1–334 (MTTIDTASET…SEDLPLNLSR (334 aa)) are a; substrate-binding. The b stretch occupies residues 335–550 (EMLQNNPQLA…GFGPDRELEK (216 aa)). Residues 551–628 (MLARANKGAA…LVLRGVVAHG (78 aa)) are c.

It belongs to the heat shock protein 90 family. In terms of assembly, homodimer.

It localises to the cytoplasm. Its function is as follows. Molecular chaperone. Has ATPase activity. In Rhodopseudomonas palustris (strain HaA2), this protein is Chaperone protein HtpG.